Here is a 380-residue protein sequence, read N- to C-terminus: Chaperone protein DnaJ (380 aa).

The J domain maps to 5–70 (DYYEVLGLQK…EKRAAYDQYG (66 aa)). A CR-type zinc finger spans residues 136–214 (GCKKDIRIST…CHGDGRVQKA (79 aa)). 8 residues coordinate Zn(2+): cysteine 149, cysteine 152, cysteine 166, cysteine 169, cysteine 188, cysteine 191, cysteine 202, and cysteine 205. 4 CXXCXGXG motif repeats span residues 149-156 (CDTCHGSG), 166-173 (CSHCHGSG), 188-195 (CPSCHGSG), and 202-209 (CKSCHGDG).

It belongs to the DnaJ family. In terms of assembly, homodimer. Requires Zn(2+) as cofactor.

Its subcellular location is the cytoplasm. In terms of biological role, participates actively in the response to hyperosmotic and heat shock by preventing the aggregation of stress-denatured proteins and by disaggregating proteins, also in an autonomous, DnaK-independent fashion. Unfolded proteins bind initially to DnaJ; upon interaction with the DnaJ-bound protein, DnaK hydrolyzes its bound ATP, resulting in the formation of a stable complex. GrpE releases ADP from DnaK; ATP binding to DnaK triggers the release of the substrate protein, thus completing the reaction cycle. Several rounds of ATP-dependent interactions between DnaJ, DnaK and GrpE are required for fully efficient folding. Also involved, together with DnaK and GrpE, in the DNA replication of plasmids through activation of initiation proteins. The chain is Chaperone protein DnaJ from Actinobacillus pleuropneumoniae serotype 5b (strain L20).